A 365-amino-acid polypeptide reads, in one-letter code: tRNA(Met) cytidine acetate ligase (365 aa).

Residues 7–20 (IAEF…HKYL), Gly96, Asn152, and Arg175 contribute to the ATP site.

This sequence belongs to the TmcAL family.

It is found in the cytoplasm. The catalysed reaction is cytidine(34) in elongator tRNA(Met) + acetate + ATP = N(4)-acetylcytidine(34) in elongator tRNA(Met) + AMP + diphosphate. Its function is as follows. Catalyzes the formation of N(4)-acetylcytidine (ac(4)C) at the wobble position of elongator tRNA(Met), using acetate and ATP as substrates. First activates an acetate ion to form acetyladenylate (Ac-AMP) and then transfers the acetyl group to tRNA to form ac(4)C34. The polypeptide is tRNA(Met) cytidine acetate ligase (Streptococcus pneumoniae (strain Taiwan19F-14)).